Here is a 284-residue protein sequence, read N- to C-terminus: 4-hydroxybenzoate octaprenyltransferase (284 aa).

The next 8 membrane-spanning stretches (helical) occupy residues 16-36, 40-60, 91-111, 132-152, 157-177, 206-226, 231-251, and 259-279; these read PIGI…ASDG, WTLL…GCAI, LLVA…LNTL, FFAI…PMGF, NTVP…AVAY, VAAV…VGWQ, TWFA…YTLI, and CFAA…GVVL.

This sequence belongs to the UbiA prenyltransferase family. Requires Mg(2+) as cofactor.

The protein localises to the cell inner membrane. The enzyme catalyses all-trans-octaprenyl diphosphate + 4-hydroxybenzoate = 4-hydroxy-3-(all-trans-octaprenyl)benzoate + diphosphate. It participates in cofactor biosynthesis; ubiquinone biosynthesis. In terms of biological role, catalyzes the prenylation of para-hydroxybenzoate (PHB) with an all-trans polyprenyl group. Mediates the second step in the final reaction sequence of ubiquinone-8 (UQ-8) biosynthesis, which is the condensation of the polyisoprenoid side chain with PHB, generating the first membrane-bound Q intermediate 3-octaprenyl-4-hydroxybenzoate. The protein is 4-hydroxybenzoate octaprenyltransferase of Herminiimonas arsenicoxydans.